A 319-amino-acid chain; its full sequence is ATP-dependent 6-phosphofructokinase (319 aa).

Glycine 11 serves as a coordination point for ATP. 21-25 (RAVVR) lines the ADP pocket. ATP-binding positions include 72 to 73 (RC) and 102 to 105 (GDGS). Aspartate 103 contacts Mg(2+). 125-127 (TID) provides a ligand contact to substrate. The Proton acceptor role is filled by aspartate 127. Arginine 154 contacts ADP. Substrate contacts are provided by residues arginine 162 and 169 to 171 (MGR). ADP-binding positions include 185–187 (GAE), lysine 211, and 213–215 (KMH). Substrate is bound by residues glutamate 222, arginine 243, and 249–252 (HIQR).

It belongs to the phosphofructokinase type A (PFKA) family. ATP-dependent PFK group I subfamily. Prokaryotic clade 'B1' sub-subfamily. In terms of assembly, homotetramer. Requires Mg(2+) as cofactor.

It localises to the cytoplasm. It catalyses the reaction beta-D-fructose 6-phosphate + ATP = beta-D-fructose 1,6-bisphosphate + ADP + H(+). The protein operates within carbohydrate degradation; glycolysis; D-glyceraldehyde 3-phosphate and glycerone phosphate from D-glucose: step 3/4. Its activity is regulated as follows. Allosterically activated by ADP and other diphosphonucleosides, and allosterically inhibited by phosphoenolpyruvate. Catalyzes the phosphorylation of D-fructose 6-phosphate to fructose 1,6-bisphosphate by ATP, the first committing step of glycolysis. This is ATP-dependent 6-phosphofructokinase from Clostridium botulinum (strain 657 / Type Ba4).